Consider the following 992-residue polypeptide: Probable RNA-dependent RNA polymerase 3 (992 aa).

Residues 88 to 113 are disordered; sequence PRLSPGESPVQSPRTPAKKSCRASQD.

It belongs to the RdRP family.

The catalysed reaction is RNA(n) + a ribonucleoside 5'-triphosphate = RNA(n+1) + diphosphate. Its function is as follows. Probably involved in the RNA silencing pathway and required for the generation of small interfering RNAs (siRNAs). The polypeptide is Probable RNA-dependent RNA polymerase 3 (RDR3) (Arabidopsis thaliana (Mouse-ear cress)).